The sequence spans 407 residues: Acetate kinase (407 aa).

Position 10 (Asn10) interacts with Mg(2+). Residue Lys17 participates in ATP binding. A substrate-binding site is contributed by Arg93. The Proton donor/acceptor role is filled by Asp150. ATP-binding positions include 210–214 (HLGNG), 284–286 (DMR), and 332–336 (GVGEN). Mg(2+) is bound at residue Glu386.

Belongs to the acetokinase family. Homodimer. Requires Mg(2+) as cofactor. The cofactor is Mn(2+).

Its subcellular location is the cytoplasm. The catalysed reaction is acetate + ATP = acetyl phosphate + ADP. Its pathway is metabolic intermediate biosynthesis; acetyl-CoA biosynthesis; acetyl-CoA from acetate: step 1/2. Its function is as follows. Catalyzes the formation of acetyl phosphate from acetate and ATP. Can also catalyze the reverse reaction. The sequence is that of Acetate kinase from Streptomyces coelicolor (strain ATCC BAA-471 / A3(2) / M145).